Here is a 612-residue protein sequence, read N- to C-terminus: UvrABC system protein C (612 aa).

Residues 13–92 enclose the GIY-YIG domain; sequence AKPGVYIMHD…IKEHRPKYNT (80 aa). Residues 204–239 enclose the UVR domain; that stretch reads KKIMDRLTTQMQEASEKMEYEEAARYRDLLMSVKQV.

Belongs to the UvrC family. As to quaternary structure, interacts with UvrB in an incision complex.

It localises to the cytoplasm. Its function is as follows. The UvrABC repair system catalyzes the recognition and processing of DNA lesions. UvrC both incises the 5' and 3' sides of the lesion. The N-terminal half is responsible for the 3' incision and the C-terminal half is responsible for the 5' incision. The protein is UvrABC system protein C of Lachnospira eligens (strain ATCC 27750 / DSM 3376 / VPI C15-48 / C15-B4) (Eubacterium eligens).